The sequence spans 295 residues: uncharacterized protein (295 aa).

An N-terminal signal peptide occupies residues 1–19 (MHKLLLIITVFSTFNVAQA).

This is an uncharacterized protein from Rickettsia typhi (strain ATCC VR-144 / Wilmington).